Here is a 402-residue protein sequence, read N- to C-terminus: Flavohemoprotein (402 aa).

The Globin domain maps to 1–136 (MLSEKTIEIV…IADAFISIEA (136 aa)). A heme b-binding site is contributed by His85. Residues Tyr95 and Glu135 each act as charge relay system in the active site. The interval 147 to 402 (GGWKDFRNFV…EFFGPAASLQ (256 aa)) is reductase. Residues 150–260 (KDFRNFVVVK…SAPAGDFVLN (111 aa)) enclose the FAD-binding FR-type domain. FAD is bound by residues Tyr188 and 204 to 207 (RQYS). 273–278 (GVGITP) lines the NADP(+) pocket. 394–397 (FFGP) is an FAD binding site.

It belongs to the globin family. Two-domain flavohemoproteins subfamily. The protein in the C-terminal section; belongs to the flavoprotein pyridine nucleotide cytochrome reductase family. It depends on heme b as a cofactor. FAD is required as a cofactor.

It catalyses the reaction 2 nitric oxide + NADPH + 2 O2 = 2 nitrate + NADP(+) + H(+). It carries out the reaction 2 nitric oxide + NADH + 2 O2 = 2 nitrate + NAD(+) + H(+). Its function is as follows. Is involved in NO detoxification in an aerobic process, termed nitric oxide dioxygenase (NOD) reaction that utilizes O(2) and NAD(P)H to convert NO to nitrate, which protects the bacterium from various noxious nitrogen compounds. Therefore, plays a central role in the inducible response to nitrosative stress. This chain is Flavohemoprotein, found in Bacillus anthracis.